Reading from the N-terminus, the 345-residue chain is Phosphoribosylformylglycinamidine cyclo-ligase (345 aa).

This sequence belongs to the AIR synthase family.

Its subcellular location is the cytoplasm. The enzyme catalyses 2-formamido-N(1)-(5-O-phospho-beta-D-ribosyl)acetamidine + ATP = 5-amino-1-(5-phospho-beta-D-ribosyl)imidazole + ADP + phosphate + H(+). It functions in the pathway purine metabolism; IMP biosynthesis via de novo pathway; 5-amino-1-(5-phospho-D-ribosyl)imidazole from N(2)-formyl-N(1)-(5-phospho-D-ribosyl)glycinamide: step 2/2. In Prochlorococcus marinus (strain MIT 9313), this protein is Phosphoribosylformylglycinamidine cyclo-ligase.